The sequence spans 515 residues: Maturase K (515 aa).

Belongs to the intron maturase 2 family. MatK subfamily.

It localises to the plastid. Its subcellular location is the chloroplast. Functionally, usually encoded in the trnK tRNA gene intron. Probably assists in splicing its own and other chloroplast group II introns. This Trillium pusillum (Dwarf wakerobin) protein is Maturase K.